The chain runs to 574 residues: Glycine--tRNA ligase (574 aa).

Substrate is bound by residues Arg96 and Glu162. Residues 194-196 (RNE), 204-209 (IRLREF), 327-328 (EC), and 450-453 (GIDR) contribute to the ATP site. 209-213 (FTQAE) provides a ligand contact to substrate. 446 to 450 (EPSYG) provides a ligand contact to substrate.

It belongs to the class-II aminoacyl-tRNA synthetase family.

The protein resides in the cytoplasm. It catalyses the reaction tRNA(Gly) + glycine + ATP = glycyl-tRNA(Gly) + AMP + diphosphate. Catalyzes the attachment of glycine to tRNA(Gly). This Methanococcus maripaludis (strain C6 / ATCC BAA-1332) protein is Glycine--tRNA ligase.